Consider the following 305-residue polypeptide: Oxygen-dependent coproporphyrinogen-III oxidase (305 aa).

Serine 98 provides a ligand contact to substrate. A divalent metal cation is bound by residues histidine 102 and histidine 112. The Proton donor role is filled by histidine 112. 114-116 (NVR) serves as a coordination point for substrate. 2 residues coordinate a divalent metal cation: histidine 151 and histidine 181. Residues 246-281 (YVEFNLVYDRGTLFGLQSGGRTESILMSMPPLARWE) form an important for dimerization region. 264–266 (GGR) contributes to the substrate binding site.

It belongs to the aerobic coproporphyrinogen-III oxidase family. In terms of assembly, homodimer. A divalent metal cation is required as a cofactor.

The protein localises to the cytoplasm. The catalysed reaction is coproporphyrinogen III + O2 + 2 H(+) = protoporphyrinogen IX + 2 CO2 + 2 H2O. The protein operates within porphyrin-containing compound metabolism; protoporphyrin-IX biosynthesis; protoporphyrinogen-IX from coproporphyrinogen-III (O2 route): step 1/1. Its function is as follows. Involved in the heme biosynthesis. Catalyzes the aerobic oxidative decarboxylation of propionate groups of rings A and B of coproporphyrinogen-III to yield the vinyl groups in protoporphyrinogen-IX. This is Oxygen-dependent coproporphyrinogen-III oxidase from Vibrio parahaemolyticus serotype O3:K6 (strain RIMD 2210633).